Consider the following 652-residue polypeptide: MELKGVHQQNGTSNGTGAVGAEGESAPPTAPATAEAAASLETTTEKVDAEQQKPERTNWGNGLEFLMSCISVSVGLGNVWRFPFTAYENGGGAFLIPYIIVLFLIGKPMYYLEMIMGQFTSQGTVKIWSVVPGFVGVGYGQAFATICIITYYSSLLALTLYYLFVSFQSVLPWSYCWEEWMNCVDSRPQEDTDALLLSSSNVTNVTALTDTVKLQSSSELYFLNVVIKEKMDISDGIGDPDWKLTLALFVSWVVIFLVIMRGVKSSGKAAYFLALFPYVVLFILLVRAVTLEGARDGIIFFLEPQWGELLNPTVWKNAVVQCFFSLAVGSGPIIMFASYNRFDHGIYRDAMIVTTLDTLTSLLGGITIFAILGNLAHNLQIENIRDVVRSGTGLAFISYPDAISKFQAVPQLFSVLFFFMLFVLGIGSIVALQSTIVTILCDQFKSWKYWKVALATSICGFLMGLVYVTPGGQWILTLVDFYGGTYVVFILAIFELAGIVWIYGMQNFCDDVEFMCNRRVSLYWRVCWSFFTPVMMIVIFIYSMVTIEPITYSEQFFPEAGNVAGWLLFGIGAAQFPLWWMWYISQHREGSLGQSFVASLRPSDKWGPANPETKRQWVIFKNEKAAQRATKKQSSKLGAFWQKLGHFCGSNT.

A disordered region spans residues 1–54 (MELKGVHQQNGTSNGTGAVGAEGESAPPTAPATAEAAASLETTTEKVDAEQQKP). At 1-58 (MELKGVHQQNGTSNGTGAVGAEGESAPPTAPATAEAAASLETTTEKVDAEQQKPERTN) the chain is on the cytoplasmic side. Residues 7–16 (HQQNGTSNGT) show a composition bias toward polar residues. The span at 21 to 42 (AEGESAPPTAPATAEAAASLET) shows a compositional bias: low complexity. A compositionally biased stretch (basic and acidic residues) spans 43 to 54 (TTEKVDAEQQKP). A run of 4 helical transmembrane segments spans residues 59–79 (WGNG…LGNV), 92–112 (GAFL…MYYL), 130–150 (VVPG…CIIT), and 155–175 (LLAL…PWSY). 2 N-linked (GlcNAc...) asparagine glycosylation sites follow: Asn-201 and Asn-204. Transmembrane regions (helical) follow at residues 240 to 260 (PDWK…LVIM), 269 to 289 (AAYF…VRAV), 318 to 338 (AVVQ…MFAS), 352 to 372 (IVTT…FAIL), 412 to 432 (LFSV…IVAL), 458 to 478 (ICGF…ILTL), 485 to 505 (TYVV…IYGM), 527 to 547 (CWSF…MVTI), and 564 to 584 (AGWL…MWYI).

The protein belongs to the sodium:neurotransmitter symporter (SNF) (TC 2.A.22) family.

It localises to the membrane. In terms of biological role, unusual broad substrate spectrum amino acid:sodium cotransporter that promotes absorption of the D isomers of essential amino acids. Neutral amino acids are the preferred substrates, especially methionine and phenylalanine. The polypeptide is Sodium-dependent nutrient amino acid transporter 1 (Drosophila persimilis (Fruit fly)).